Reading from the N-terminus, the 89-residue chain is Small ribosomal subunit protein uS14 (89 aa).

Belongs to the universal ribosomal protein uS14 family. In terms of assembly, part of the 30S ribosomal subunit. Contacts proteins S3 and S10.

In terms of biological role, binds 16S rRNA, required for the assembly of 30S particles and may also be responsible for determining the conformation of the 16S rRNA at the A site. In Shouchella clausii (strain KSM-K16) (Alkalihalobacillus clausii), this protein is Small ribosomal subunit protein uS14.